The chain runs to 901 residues: MutS protein homolog 5 (901 aa).

An ATP-binding site is contributed by 643-650; the sequence is GANASGKS.

This sequence belongs to the DNA mismatch repair MutS family. In terms of assembly, heterooligomer of MSH4 and MSH5.

Functionally, involved in meiotic recombination. Facilitate crossovers between homologs during meiosis. This Saccharomyces cerevisiae (strain ATCC 204508 / S288c) (Baker's yeast) protein is MutS protein homolog 5 (MSH5).